Reading from the N-terminus, the 254-residue chain is Imidazole glycerol phosphate synthase subunit HisF (254 aa).

Residues D11 and D130 contribute to the active site.

The protein belongs to the HisA/HisF family. As to quaternary structure, heterodimer of HisH and HisF.

The protein localises to the cytoplasm. The catalysed reaction is 5-[(5-phospho-1-deoxy-D-ribulos-1-ylimino)methylamino]-1-(5-phospho-beta-D-ribosyl)imidazole-4-carboxamide + L-glutamine = D-erythro-1-(imidazol-4-yl)glycerol 3-phosphate + 5-amino-1-(5-phospho-beta-D-ribosyl)imidazole-4-carboxamide + L-glutamate + H(+). It participates in amino-acid biosynthesis; L-histidine biosynthesis; L-histidine from 5-phospho-alpha-D-ribose 1-diphosphate: step 5/9. Functionally, IGPS catalyzes the conversion of PRFAR and glutamine to IGP, AICAR and glutamate. The HisF subunit catalyzes the cyclization activity that produces IGP and AICAR from PRFAR using the ammonia provided by the HisH subunit. This Microcystis aeruginosa (strain NIES-843 / IAM M-2473) protein is Imidazole glycerol phosphate synthase subunit HisF.